A 327-amino-acid chain; its full sequence is GrpE protein homolog 2, mitochondrial (327 aa).

The transit peptide at 1–39 directs the protein to the mitochondrion; that stretch reads MLVLRILSRVTRNAGIRSSLSAVTLPARNQTPVFSSRFH. Residues 68-140 form a disordered region; that stretch reads SSSTSPESDE…DSESDDDELS (73 aa). Basic and acidic residues-rich tracts occupy residues 75-93 and 103-113; these read SDEKKTHTEASKTSEEKPT and SESKDSVTDSA. A compositionally biased stretch (acidic residues) spans 130 to 140; sequence SDSESDDDELS.

Belongs to the GrpE family. As to quaternary structure, probable component of the PAM complex, at least composed of SSC1 (mtHsp70), MGE1, TIM44, PAM16/TIM16, PAM17 and PAM18/TIM14. Interacts with SSQ1.

The protein localises to the mitochondrion matrix. Its function is as follows. Essential component of the PAM complex, a complex required for the translocation of transit peptide-containing proteins from the inner membrane into the mitochondrial matrix in an ATP-dependent manner. Seems to control the nucleotide-dependent binding of mitochondrial HSP70 to substrate proteins. Binds ATP. Interacts with copper ions Cu(2+). Confers thermotolerance to long-term exposure at moderately high temperature (TMHT at 35 degrees Celsius). The sequence is that of GrpE protein homolog 2, mitochondrial from Arabidopsis thaliana (Mouse-ear cress).